The primary structure comprises 35 residues: Potassium channel toxin alpha-KTx 6.15 (35 aa).

Intrachain disulfides connect C3-C24, C9-C29, C13-C31, and C19-C34.

This sequence belongs to the short scorpion toxin superfamily. Potassium channel inhibitor family. Alpha-KTx 06 subfamily. As to expression, expressed by the venom gland.

Its subcellular location is the secreted. In terms of biological role, blocks voltage-gated potassium channels rKv1.1/KCNA1 (IC(50)=13 nM), rKv1.2/KCNA2 (IC(50)=16 nM) and rKv1.3/KCNA3 (IC(50)=2 nM). This Hemiscorpius lepturus (Scorpion) protein is Potassium channel toxin alpha-KTx 6.15.